Consider the following 373-residue polypeptide: UDP-N-acetylglucosamine--N-acetylmuramyl-(pentapeptide) pyrophosphoryl-undecaprenol N-acetylglucosamine transferase (373 aa).

UDP-N-acetyl-alpha-D-glucosamine contacts are provided by residues 16-18 (TGG), asparagine 128, arginine 164, serine 192, isoleucine 250, and glutamine 295.

This sequence belongs to the glycosyltransferase 28 family. MurG subfamily.

The protein localises to the cell inner membrane. It carries out the reaction di-trans,octa-cis-undecaprenyl diphospho-N-acetyl-alpha-D-muramoyl-L-alanyl-D-glutamyl-meso-2,6-diaminopimeloyl-D-alanyl-D-alanine + UDP-N-acetyl-alpha-D-glucosamine = di-trans,octa-cis-undecaprenyl diphospho-[N-acetyl-alpha-D-glucosaminyl-(1-&gt;4)]-N-acetyl-alpha-D-muramoyl-L-alanyl-D-glutamyl-meso-2,6-diaminopimeloyl-D-alanyl-D-alanine + UDP + H(+). It functions in the pathway cell wall biogenesis; peptidoglycan biosynthesis. Its function is as follows. Cell wall formation. Catalyzes the transfer of a GlcNAc subunit on undecaprenyl-pyrophosphoryl-MurNAc-pentapeptide (lipid intermediate I) to form undecaprenyl-pyrophosphoryl-MurNAc-(pentapeptide)GlcNAc (lipid intermediate II). The polypeptide is UDP-N-acetylglucosamine--N-acetylmuramyl-(pentapeptide) pyrophosphoryl-undecaprenol N-acetylglucosamine transferase (Paraburkholderia phymatum (strain DSM 17167 / CIP 108236 / LMG 21445 / STM815) (Burkholderia phymatum)).